A 325-amino-acid chain; its full sequence is Tetraacyldisaccharide 4'-kinase (325 aa).

ATP is bound at residue 58–65 (TVGGSGKT).

This sequence belongs to the LpxK family.

It carries out the reaction a lipid A disaccharide + ATP = a lipid IVA + ADP + H(+). The protein operates within glycolipid biosynthesis; lipid IV(A) biosynthesis; lipid IV(A) from (3R)-3-hydroxytetradecanoyl-[acyl-carrier-protein] and UDP-N-acetyl-alpha-D-glucosamine: step 6/6. In terms of biological role, transfers the gamma-phosphate of ATP to the 4'-position of a tetraacyldisaccharide 1-phosphate intermediate (termed DS-1-P) to form tetraacyldisaccharide 1,4'-bis-phosphate (lipid IVA). In Coxiella burnetii (strain CbuK_Q154) (Coxiella burnetii (strain Q154)), this protein is Tetraacyldisaccharide 4'-kinase.